A 257-amino-acid polypeptide reads, in one-letter code: Global transcriptional regulator CodY (257 aa).

Positions 1-155 (MSLLSKTREL…AATVLGMEIL (155 aa)) are GAF domain. The segment at residues 203–222 (ASKVADRVGITRSVIVNALR) is a DNA-binding region (H-T-H motif).

This sequence belongs to the CodY family.

Its subcellular location is the cytoplasm. DNA-binding global transcriptional regulator which is involved in the adaptive response to starvation and acts by directly or indirectly controlling the expression of numerous genes in response to nutrient availability. During rapid exponential growth, CodY is highly active and represses genes whose products allow adaptation to nutrient depletion. In Staphylococcus carnosus (strain TM300), this protein is Global transcriptional regulator CodY.